The primary structure comprises 860 residues: GAS2-like protein 2 (860 aa).

Positions Met-1–Arg-12 are enriched in basic residues. A disordered region spans residues Met-1 to Arg-22. The Calponin-homology (CH) domain maps to Glu-32–Trp-159. Residues Cys-201 to Arg-273 enclose the GAR domain. Disordered regions lie at residues Pro-281–Ser-459, Gln-473–Ser-574, Thr-697–Arg-743, Lys-758–Pro-781, and Ala-801–Val-860. Over residues Gly-301–Ser-316 the composition is skewed to polar residues. Over residues Pro-347–Glu-364 the composition is skewed to basic and acidic residues. 2 stretches are compositionally biased toward polar residues: residues Lys-365–Ser-393 and Gln-473–Pro-485. The interval Gln-431–Val-860 is interaction with ADORA2A and GNAS. The segment covering Asn-530–Thr-549 has biased composition (basic and acidic residues). A compositionally biased stretch (polar residues) spans Arg-724–Lys-733. Basic residues predominate over residues Lys-758–Asp-768. Over residues Ser-828–Glu-840 the composition is skewed to polar residues.

Belongs to the GAS2 family. As to quaternary structure, interacts with ADORA2A (via its cytoplasmic C-terminal domain). Interacts with GNAS, GNAL, GNAQ, and GNA13. Interacts with MAPRE1. In terms of tissue distribution, expressed in tracheal epithelial cells (at protein level).

The protein localises to the cytoplasm. It localises to the cytoskeleton. The protein resides in the cell membrane. It is found in the stress fiber. Its subcellular location is the cilium basal body. In terms of biological role, involved in the cross-linking of microtubules and microfilaments. Regulates microtubule dynamics and stability by interacting with microtubule plus-end tracking proteins, such as MAPRE1, to regulate microtubule growth along actin stress fibers. Enhances ADORA2-mediated adenylyl cyclase activation by acting as a scaffold to recruit trimeric G-protein complexes to ADORA2A. Regulates ciliary orientation and performance in cells located in the airway. This Mus musculus (Mouse) protein is GAS2-like protein 2 (Gas2l2).